The primary structure comprises 868 residues: Facilitated trehalose transporter Tret1 (868 aa).

2 disordered regions span residues 1 to 213 (MSGR…QKAT) and 257 to 314 (KESS…LIHR). Over 1 to 403 (MSGRDNRGAG…VYRPTTNPIY (403 aa)) the chain is Cytoplasmic. Positions 25–43 (KLKEKLTRAGDDQGYHRVE) are enriched in basic and acidic residues. 3 stretches are compositionally biased toward low complexity: residues 44 to 57 (SNLS…SLDT), 79 to 91 (PQQQ…QQLR), and 117 to 126 (PFQQQQQRTP). Basic and acidic residues-rich tracts occupy residues 146-155 (EIREHRDRQQ) and 257-290 (KESS…KLDK). A phosphoserine mark is found at S259, S260, S261, S331, and S333. A disordered region spans residues 335-367 (EDFHTSRQHFQQQRSISTDSRKSRRPYEMDEMG). The span at 342-352 (QHFQQQRSIST) shows a compositional bias: polar residues. The segment covering 353–367 (DSRKSRRPYEMDEMG) has biased composition (basic and acidic residues). Residues 404–424 (IWTQVLAALSVSLGSLVVGFV) traverse the membrane as a helical segment. The Extracellular segment spans residues 425-451 (SAYTSPALVSMTNRNMTSFEVTPQAAS). A glycan (N-linked (GlcNAc...) asparagine) is linked at N439. A helical membrane pass occupies residues 452 to 472 (WVGGIMPLAGLAGGIAGGPFI). The Cytoplasmic segment spans residues 473 to 484 (EYLGRRNTILAT). Residues 485–505 (AIPFIVSSLLIACAVNVAMVL) traverse the membrane as a helical segment. At 506–508 (AGR) the chain is on the extracellular side. A helical transmembrane segment spans residues 509–529 (FLAGFCVGIASLSLPVYLGET). Residues 530–535 (VQPEVR) lie on the Cytoplasmic side of the membrane. A helical transmembrane segment spans residues 536 to 556 (GTLGLLPTAFGNIGILLCFVA). The Extracellular portion of the chain corresponds to 557 to 563 (GTYMDWS). Residues 564–584 (MLAFLGAALPVPFLILMFLIP) traverse the membrane as a helical segment. Topologically, residues 585–653 (ETPRWFVSRG…NLKPLSISLG (69 aa)) are cytoplasmic. A helical transmembrane segment spans residues 654 to 674 (LMFFQQLSGINAVIFYTVSIF). Topologically, residues 675-684 (KDAGSTIDGN) are extracellular. The chain crosses the membrane as a helical span at residues 685–705 (LCTIIVGIVNFMATFIATLLI). At 706–711 (DRAGRK) the chain is on the cytoplasmic side. Residues 712–732 (ILLYVSNIAMIITLFVLGGFF) form a helical membrane-spanning segment. At 733 to 751 (YCKSHGQDVSQLGWLPLSC) the chain is on the extracellular side. Residues 752–772 (FVIYILGFSLGFGPIPWLMMG) form a helical membrane-spanning segment. The Cytoplasmic portion of the chain corresponds to 773–778 (EILPSK). Residues 779–799 (IRGSAASVATAFNWSCTFVVT) traverse the membrane as a helical segment. Topologically, residues 800-812 (KTFQDMIDFMGAH) are extracellular. A helical transmembrane segment spans residues 813-833 (GAFWLFGSICFIGLFFVILYV). The Cytoplasmic portion of the chain corresponds to 834-868 (PETQGKTLEDIERKMMGRVRRMSSVANMKPLAFNM). Phosphoserine occurs at positions 856 and 857.

Belongs to the major facilitator superfamily. Sugar transporter (TC 2.A.1.1) family. Trehalose transporter subfamily.

Its subcellular location is the cell membrane. In terms of biological role, low-capacity facilitative transporter for trehalose. Does not transport maltose, sucrose or lactose. Mediates the bidirectional transfer of trehalose. Responsible for the transport of trehalose synthesized in the fat body and the incorporation of trehalose into other tissues that require a carbon source, thereby regulating trehalose levels in the hemolymph. The sequence is that of Facilitated trehalose transporter Tret1 from Drosophila pseudoobscura pseudoobscura (Fruit fly).